The sequence spans 88 residues: Small ribosomal subunit protein bS16 (88 aa).

It belongs to the bacterial ribosomal protein bS16 family.

This Buchnera aphidicola subsp. Cinara cedri (strain Cc) protein is Small ribosomal subunit protein bS16.